Here is a 327-residue protein sequence, read N- to C-terminus: Dolichyl-phosphate beta-glucosyltransferase (327 aa).

At 1-15 the chain is on the lumenal side; that stretch reads MIDLFINIASFTIYG. The helical transmembrane segment at 16–36 threads the bilayer; that stretch reads IPVIPLFIIVFVILSYYLLLL. At 37–327 the chain is on the cytoplasmic side; the sequence is HDESPLWLEK…YLLGIWKIKS (291 aa).

This sequence belongs to the glycosyltransferase 2 family.

It is found in the endoplasmic reticulum membrane. The enzyme catalyses a di-trans,poly-cis-dolichyl phosphate + UDP-alpha-D-glucose = a di-trans,poly-cis-dolichyl beta-D-glucosyl phosphate + UDP. Its pathway is protein modification; protein glycosylation. Endoplasmic reticulum membrane-bound UDP-glucose:dolichyl-phosphate glucosyltransferase involved in protein N-linked glycosylation. This is Dolichyl-phosphate beta-glucosyltransferase (alg5) from Dictyostelium discoideum (Social amoeba).